A 423-amino-acid polypeptide reads, in one-letter code: MLDTLLINIGQLLTMDQEDGLLRREAMNTLPVIENGVVGIENGVITFVGTAEEAKGLQAKEVIDSGGKMVSPGLVDPHTHLVFGGSRENEIALKLQGVPYLEILEQGGGILSTVNATKQASKEELVQKAKFHLDRMLSFGVTTVEAKSGYGLDDETEWKQLEATAQLQKEHPIDLVSTFLGAHAVPKEYKGRSKEFLQWMLDLLPEMKEKQLVEFVDIFCETGVFSVEESKEFLLKAKELGFDVKIHADEIDPLGGAEAAAEIGAASADHLVGASDKGIEMLANSNTVATLLPGTTFYLNKESFARGRKMIDEGVAVALATDFNPGSCPTENIQLIMSIAMLKLKMTPEEVWNAVTVNSSYAINRGDVAGKIRVGRKADLVLWDAYNYAYVPYHYGVSHVNTVWKNGNIAYTRGEQSWSTATI.

His78 and His80 together coordinate Fe(3+). Zn(2+)-binding residues include His78 and His80. Arg87, Tyr150, and His183 together coordinate 4-imidazolone-5-propanoate. Position 150 (Tyr150) interacts with N-formimidoyl-L-glutamate. A Fe(3+)-binding site is contributed by His247. His247 contributes to the Zn(2+) binding site. Glu250 is a binding site for 4-imidazolone-5-propanoate. Asp322 lines the Fe(3+) pocket. Position 322 (Asp322) interacts with Zn(2+). Positions 324 and 326 each coordinate N-formimidoyl-L-glutamate. Ser327 serves as a coordination point for 4-imidazolone-5-propanoate.

The protein belongs to the metallo-dependent hydrolases superfamily. HutI family. The cofactor is Zn(2+). It depends on Fe(3+) as a cofactor.

The protein resides in the cytoplasm. It catalyses the reaction 4-imidazolone-5-propanoate + H2O = N-formimidoyl-L-glutamate. Its pathway is amino-acid degradation; L-histidine degradation into L-glutamate; N-formimidoyl-L-glutamate from L-histidine: step 3/3. Its function is as follows. Catalyzes the hydrolytic cleavage of the carbon-nitrogen bond in imidazolone-5-propanoate to yield N-formimidoyl-L-glutamate. It is the third step in the universal histidine degradation pathway. In Bacillus cereus (strain ATCC 14579 / DSM 31 / CCUG 7414 / JCM 2152 / NBRC 15305 / NCIMB 9373 / NCTC 2599 / NRRL B-3711), this protein is Imidazolonepropionase.